A 558-amino-acid chain; its full sequence is Xylulose kinase 2 (558 aa).

Substrate is bound by residues Asp-16, 20-23, Ser-111, and Asp-283; that span reads QSMK. ATP-binding positions include Thr-305 and 456 to 460; that span reads GASAN.

It belongs to the FGGY kinase family. It depends on a divalent metal cation as a cofactor.

It is found in the cytoplasm. It carries out the reaction D-xylulose + ATP = D-xylulose 5-phosphate + ADP + H(+). Its pathway is isoprenoid biosynthesis; carotenoid biosynthesis. Its activity is regulated as follows. Repressed by oxo-clomazone (keto-clomazone), a bleaching herbicide. Functionally, mediates 1-deoxy-D-xylulose (DX) phosphorylation in the cytoplasm prior to the translocation of 1-deoxy-D-xylulose 5-phosphate into plastids. Can also phosphorylate D-xylulose (Xyl). Uses preferentially ATP as cosubstrate. The polypeptide is Xylulose kinase 2 (Arabidopsis thaliana (Mouse-ear cress)).